Here is a 282-residue protein sequence, read N- to C-terminus: B3 domain-containing protein At5g06250 (282 aa).

The segment at residues 46–159 (FEKSLTPSDV…RLFIGWRRRG (114 aa)) is a DNA-binding region (TF-B3).

Its subcellular location is the nucleus. This chain is B3 domain-containing protein At5g06250, found in Arabidopsis thaliana (Mouse-ear cress).